Here is an 858-residue protein sequence, read N- to C-terminus: Bifunctional uridylyltransferase/uridylyl-removing enzyme (858 aa).

The tract at residues 1-324 is uridylyltransferase; that stretch reads MSAHAAPSPE…PATSGITRVL (324 aa). A uridylyl-removing region spans residues 325–681; that stretch reads SPDRFVEKQG…ARPSPIGDAL (357 aa). One can recognise an HD domain in the interval 443–565; sequence VDQHILMVLR…VGNERYLTAL (123 aa). ACT domains are found at residues 682 to 761 and 790 to 858; these read QVLV…PEPS and ILSV…AIAV.

Belongs to the GlnD family. Requires Mg(2+) as cofactor.

It catalyses the reaction [protein-PII]-L-tyrosine + UTP = [protein-PII]-uridylyl-L-tyrosine + diphosphate. It carries out the reaction [protein-PII]-uridylyl-L-tyrosine + H2O = [protein-PII]-L-tyrosine + UMP + H(+). With respect to regulation, uridylyltransferase (UTase) activity is inhibited by glutamine, while glutamine activates uridylyl-removing (UR) activity. In terms of biological role, modifies, by uridylylation and deuridylylation, the PII regulatory proteins (GlnB and homologs), in response to the nitrogen status of the cell that GlnD senses through the glutamine level. Under low glutamine levels, catalyzes the conversion of the PII proteins and UTP to PII-UMP and PPi, while under higher glutamine levels, GlnD hydrolyzes PII-UMP to PII and UMP (deuridylylation). Thus, controls uridylylation state and activity of the PII proteins, and plays an important role in the regulation of nitrogen fixation and metabolism. This Burkholderia lata (strain ATCC 17760 / DSM 23089 / LMG 22485 / NCIMB 9086 / R18194 / 383) protein is Bifunctional uridylyltransferase/uridylyl-removing enzyme.